The chain runs to 113 residues: Hydrogenase maturation factor HypA (113 aa).

Ni(2+) is bound at residue His2. Positions 73, 76, 89, and 92 each coordinate Zn(2+).

This sequence belongs to the HypA/HybF family.

Its function is as follows. Involved in the maturation of [NiFe] hydrogenases. Required for nickel insertion into the metal center of the hydrogenase. This is Hydrogenase maturation factor HypA from Chlorobaculum parvum (strain DSM 263 / NCIMB 8327) (Chlorobium vibrioforme subsp. thiosulfatophilum).